A 115-amino-acid chain; its full sequence is Macrophage migration inhibitory factor homolog (115 aa).

The Proton acceptor; via imino nitrogen role is filled by Pro-2. Residues Lys-33 and Ile-65 each coordinate substrate.

This sequence belongs to the MIF family.

The protein localises to the secreted. It catalyses the reaction L-dopachrome = 5,6-dihydroxyindole-2-carboxylate. The enzyme catalyses 3-phenylpyruvate = enol-phenylpyruvate. Functionally, tautomerization of the methyl ester of L-dopachrome. Inhibits migration of human peripheral blood mononuclear cells. In Brugia malayi (Filarial nematode worm), this protein is Macrophage migration inhibitory factor homolog.